Reading from the N-terminus, the 245-residue chain is Adapter protein MecA (245 aa).

The protein belongs to the MecA family. As to quaternary structure, homodimer.

Enables the recognition and targeting of unfolded and aggregated proteins to the ClpC protease or to other proteins involved in proteolysis. The polypeptide is Adapter protein MecA (Streptococcus pneumoniae serotype 4 (strain ATCC BAA-334 / TIGR4)).